We begin with the raw amino-acid sequence, 456 residues long: Adenylosuccinate lyase (456 aa).

N(6)-(1,2-dicarboxyethyl)-AMP-binding positions include Arg15–Tyr16, Asn90–Asp92, and Thr122–Ser123. His171 acts as the Proton donor/acceptor in catalysis. Gln247 lines the N(6)-(1,2-dicarboxyethyl)-AMP pocket. Ser295 functions as the Proton donor/acceptor in the catalytic mechanism. N(6)-(1,2-dicarboxyethyl)-AMP contacts are provided by residues Ser296, Lys301 to Asn303, Asn309, Arg335, and Ser340 to Arg344.

The protein belongs to the lyase 1 family. Adenylosuccinate lyase subfamily. In terms of assembly, homotetramer. Residues from neighboring subunits contribute catalytic and substrate-binding residues to each active site.

The enzyme catalyses N(6)-(1,2-dicarboxyethyl)-AMP = fumarate + AMP. It carries out the reaction (2S)-2-[5-amino-1-(5-phospho-beta-D-ribosyl)imidazole-4-carboxamido]succinate = 5-amino-1-(5-phospho-beta-D-ribosyl)imidazole-4-carboxamide + fumarate. It participates in purine metabolism; AMP biosynthesis via de novo pathway; AMP from IMP: step 2/2. It functions in the pathway purine metabolism; IMP biosynthesis via de novo pathway; 5-amino-1-(5-phospho-D-ribosyl)imidazole-4-carboxamide from 5-amino-1-(5-phospho-D-ribosyl)imidazole-4-carboxylate: step 2/2. Catalyzes two reactions in de novo purine nucleotide biosynthesis. Catalyzes the breakdown of 5-aminoimidazole- (N-succinylocarboxamide) ribotide (SAICAR or 2-[5-amino-1-(5-phospho-beta-D-ribosyl)imidazole-4-carboxamido]succinate) to 5-aminoimidazole-4-carboxamide ribotide (AICAR or 5-amino-1-(5-phospho-beta-D-ribosyl)imidazole-4-carboxamide) and fumarate, and of adenylosuccinate (ADS or N(6)-(1,2-dicarboxyethyl)-AMP) to adenosine monophosphate (AMP) and fumarate. This chain is Adenylosuccinate lyase (purB), found in Buchnera aphidicola subsp. Schizaphis graminum (strain Sg).